We begin with the raw amino-acid sequence, 158 residues long: Cyclic pyranopterin monophosphate synthase (158 aa).

Substrate-binding positions include 75–77 and 113–114; these read LCH and ME. The active site involves aspartate 128.

The protein belongs to the MoaC family. Homohexamer; trimer of dimers.

It catalyses the reaction (8S)-3',8-cyclo-7,8-dihydroguanosine 5'-triphosphate = cyclic pyranopterin phosphate + diphosphate. It participates in cofactor biosynthesis; molybdopterin biosynthesis. Catalyzes the conversion of (8S)-3',8-cyclo-7,8-dihydroguanosine 5'-triphosphate to cyclic pyranopterin monophosphate (cPMP). The sequence is that of Cyclic pyranopterin monophosphate synthase from Histophilus somni (strain 129Pt) (Haemophilus somnus).